Reading from the N-terminus, the 528-residue chain is Bifunctional purine biosynthesis protein PurH (528 aa).

One can recognise an MGS-like domain in the interval 2–149 (TDLAPLRRAL…KNHGFVSVVV (148 aa)).

Belongs to the PurH family.

It carries out the reaction (6R)-10-formyltetrahydrofolate + 5-amino-1-(5-phospho-beta-D-ribosyl)imidazole-4-carboxamide = 5-formamido-1-(5-phospho-D-ribosyl)imidazole-4-carboxamide + (6S)-5,6,7,8-tetrahydrofolate. The catalysed reaction is IMP + H2O = 5-formamido-1-(5-phospho-D-ribosyl)imidazole-4-carboxamide. The protein operates within purine metabolism; IMP biosynthesis via de novo pathway; 5-formamido-1-(5-phospho-D-ribosyl)imidazole-4-carboxamide from 5-amino-1-(5-phospho-D-ribosyl)imidazole-4-carboxamide (10-formyl THF route): step 1/1. It participates in purine metabolism; IMP biosynthesis via de novo pathway; IMP from 5-formamido-1-(5-phospho-D-ribosyl)imidazole-4-carboxamide: step 1/1. This Roseobacter denitrificans (strain ATCC 33942 / OCh 114) (Erythrobacter sp. (strain OCh 114)) protein is Bifunctional purine biosynthesis protein PurH.